The chain runs to 117 residues: Probable non-functional immunoglobulin kappa variable 1D-42 (117 aa).

Positions 1–22 (MDMRVPAQLLGLLLLWLPGVRF) are cleaved as a signal peptide. Positions 23–45 (DIQMTQSPSFLSASVGDRVSIIC) are framework-1. The 95-residue stretch at 23 to 117 (DIQMTQSPSF…YYCKQDFSYP (95 aa)) folds into the Ig-like domain. Cys-45 and Cys-110 are joined by a disulfide. A complementarity-determining-1 region spans residues 46–56 (WASEGISSNLA). The tract at residues 57–71 (WYLQKPGKSPKLFLY) is framework-2. The complementarity-determining-2 stretch occupies residues 72–78 (DAKDLHP). Positions 79–110 (GVSSRFSGRGSGTDFTLTIISLKPEDFAAYYC) are framework-3. The complementarity-determining-3 stretch occupies residues 111–117 (KQDFSYP).

As to quaternary structure, immunoglobulins are composed of two identical heavy chains and two identical light chains; disulfide-linked.

Its subcellular location is the secreted. It localises to the cell membrane. Probable non-functional open reading frame (ORF) of V region of the variable domain of immunoglobulin light chains. Non-functional ORF generally cannot participate in the synthesis of a productive immunoglobulin chain due to altered V-(D)-J or switch recombination and/or splicing site (at mRNA level) and/or conserved amino acid change (protein level). Immunoglobulins, also known as antibodies, are membrane-bound or secreted glycoproteins produced by B lymphocytes. In the recognition phase of humoral immunity, the membrane-bound immunoglobulins serve as receptors which, upon binding of a specific antigen, trigger the clonal expansion and differentiation of B lymphocytes into immunoglobulins-secreting plasma cells. Secreted immunoglobulins mediate the effector phase of humoral immunity, which results in the elimination of bound antigens. The antigen binding site is formed by the variable domain of one heavy chain, together with that of its associated light chain. Thus, each immunoglobulin has two antigen binding sites with remarkable affinity for a particular antigen. The variable domains are assembled by a process called V-(D)-J rearrangement and can then be subjected to somatic hypermutations which, after exposure to antigen and selection, allow affinity maturation for a particular antigen. The sequence is that of Probable non-functional immunoglobulin kappa variable 1D-42 from Homo sapiens (Human).